We begin with the raw amino-acid sequence, 951 residues long: Replication protein A 70 kDa DNA-binding subunit C (951 aa).

Positions 139 to 172 are disordered; that stretch reads AQTNNGTYSGGASMLGPSVAPRAEQAASNSSYGG. The OB DNA-binding region spans 320–403; the sequence is WTIKARVTAK…NTLNHDYEIT (84 aa). A C4-type zinc finger spans residues 612–639; that stretch reads CPKLLPVGRQCNKKAINNGDGMWHCDRC.

This sequence belongs to the replication factor A protein 1 family. As to quaternary structure, heterotrimer of RPA1, RPA2 and RPA3 (canonical replication protein A complex). Interacts with RPA2C.

The protein localises to the nucleus. Its function is as follows. Component of the replication protein A complex (RPA) required for DNA recombination, repair and replication. The activity of RPA is mediated by single-stranded DNA binding and protein interactions. Probably involved in repair of double-strand DNA breaks (DSBs) induced by genotoxic stresses. The polypeptide is Replication protein A 70 kDa DNA-binding subunit C (RPA1C) (Oryza sativa subsp. japonica (Rice)).